The sequence spans 73 residues: Aldehyde dehydrogenase (73 aa).

This sequence belongs to the aldehyde dehydrogenase family.

It carries out the reaction an aldehyde + NAD(+) + H2O = a carboxylate + NADH + 2 H(+). It participates in alcohol metabolism; ethanol degradation; acetate from ethanol: step 2/2. This is Aldehyde dehydrogenase from Geobacillus stearothermophilus (Bacillus stearothermophilus).